Here is a 244-residue protein sequence, read N- to C-terminus: Troponin I, cardiac muscle (244 aa).

Residues Met1–Val25 are compositionally biased toward acidic residues. Residues Met1–Ser67 are disordered. Ser2 is subject to N-acetylserine. At Ser2 the chain carries Phosphoserine; by CK2. Positions Pro27–Leu42 are enriched in pro residues.

It belongs to the troponin I family. As to quaternary structure, binds to actin and tropomyosin. As to expression, heart.

Functionally, troponin I is the inhibitory subunit of troponin, the thin filament regulatory complex which confers calcium-sensitivity to striated muscle actomyosin ATPase activity. The chain is Troponin I, cardiac muscle (tnni3) from Xenopus laevis (African clawed frog).